A 163-amino-acid chain; its full sequence is Cytosolic iron-sulfur assembly component 2B (163 aa).

The protein belongs to the MIP18 family.

It is found in the nucleus. The protein resides in the cytoplasm. The protein localises to the cytoskeleton. It localises to the spindle. Functionally, component of the cytosolic iron-sulfur (Fe/S) protein assembly machinery. Required for the maturation of extramitochondrial Fe/S proteins. May play a role in chromosome segregation through establishment of sister chromatid cohesion. In Dictyostelium discoideum (Social amoeba), this protein is Cytosolic iron-sulfur assembly component 2B.